The sequence spans 1043 residues: Isoleucine--tRNA ligase (1043 aa).

The 'HIGH' region signature appears at 49–59; the sequence is PFATGLPHYGH. A 'KMSKS' region motif is present at residues 592 to 596; sequence KMSKR. Lysine 595 contacts ATP.

It belongs to the class-I aminoacyl-tRNA synthetase family. IleS type 2 subfamily. Monomer. Zn(2+) is required as a cofactor.

The protein resides in the cytoplasm. It carries out the reaction tRNA(Ile) + L-isoleucine + ATP = L-isoleucyl-tRNA(Ile) + AMP + diphosphate. Catalyzes the attachment of isoleucine to tRNA(Ile). As IleRS can inadvertently accommodate and process structurally similar amino acids such as valine, to avoid such errors it has two additional distinct tRNA(Ile)-dependent editing activities. One activity is designated as 'pretransfer' editing and involves the hydrolysis of activated Val-AMP. The other activity is designated 'posttransfer' editing and involves deacylation of mischarged Val-tRNA(Ile). The chain is Isoleucine--tRNA ligase from Chlamydia abortus (strain DSM 27085 / S26/3) (Chlamydophila abortus).